The primary structure comprises 241 residues: MSDDDAPESLRGAADGPAWRNFYGRRSGKTLRPSQKVYLSEDLGRLRPEGITREENPERRPLDLGALFGGRPVWLEIGFGGGEHMVHMAARNPGIGLIGCEPFVNGVAMLLGKIRAAGVENLLVHPGDVRDLFDVLPEASVSKAFLNYPDPWPKKRHHRRRFVTQGYLGPLARVLAPGATFRVATDIPDYVRQTLEEVPQAGFDLVSESGEAWEDWLSTRYEQKALREGRVPHYMTFRRQG.

The S-adenosyl-L-methionine site is built by glutamate 76, glutamate 101, aspartate 128, and aspartate 150. The active site involves aspartate 150. Substrate is bound by residues lysine 154, aspartate 186, and 219-222 (TRYE).

Belongs to the class I-like SAM-binding methyltransferase superfamily. TrmB family.

It catalyses the reaction guanosine(46) in tRNA + S-adenosyl-L-methionine = N(7)-methylguanosine(46) in tRNA + S-adenosyl-L-homocysteine. Its pathway is tRNA modification; N(7)-methylguanine-tRNA biosynthesis. Catalyzes the formation of N(7)-methylguanine at position 46 (m7G46) in tRNA. This chain is tRNA (guanine-N(7)-)-methyltransferase, found in Cereibacter sphaeroides (strain ATCC 17023 / DSM 158 / JCM 6121 / CCUG 31486 / LMG 2827 / NBRC 12203 / NCIMB 8253 / ATH 2.4.1.) (Rhodobacter sphaeroides).